The sequence spans 956 residues: DNA ligase 4 (956 aa).

Residues Glu-307, Lys-309, Ile-310, Arg-314, Glu-371, Phe-409, Glu-476, Lys-481, Lys-498, and Lys-500 each contribute to the ATP site. Residue Lys-309 is the N6-AMP-lysine intermediate of the active site. Position 371 (Glu-371) interacts with Mg(2+). Residue Glu-476 participates in Mg(2+) binding. The disordered stretch occupies residues 666-700 (LEDRKRRNAGPGRGAKRLKLANVSSDEDELGTDER). BRCT domains lie at 700 to 793 (RPTS…PRNL) and 857 to 956 (PKGM…DYPL).

Belongs to the ATP-dependent DNA ligase family. Mg(2+) serves as cofactor.

It is found in the nucleus. The enzyme catalyses ATP + (deoxyribonucleotide)n-3'-hydroxyl + 5'-phospho-(deoxyribonucleotide)m = (deoxyribonucleotide)n+m + AMP + diphosphate.. Its function is as follows. DNA ligase involved in DNA non-homologous end joining (NHEJ); required for double-strand break (DSB) repair. The protein is DNA ligase 4 (LIG4) of Yarrowia lipolytica (strain CLIB 122 / E 150) (Yeast).